Reading from the N-terminus, the 282-residue chain is Large ribosomal subunit protein uL2 (282 aa).

Residues 215–282 (RHKGIRPTVR…IIRSRKETKK (68 aa)) are disordered. Residues 263–282 (RNPKKPSTKLIIRSRKETKK) show a composition bias toward basic residues.

It belongs to the universal ribosomal protein uL2 family. As to quaternary structure, part of the 50S ribosomal subunit. Forms a bridge to the 30S subunit in the 70S ribosome.

In terms of biological role, one of the primary rRNA binding proteins. Required for association of the 30S and 50S subunits to form the 70S ribosome, for tRNA binding and peptide bond formation. It has been suggested to have peptidyltransferase activity; this is somewhat controversial. Makes several contacts with the 16S rRNA in the 70S ribosome. This is Large ribosomal subunit protein uL2 from Mesomycoplasma hyopneumoniae (strain 7448) (Mycoplasma hyopneumoniae).